We begin with the raw amino-acid sequence, 113 residues long: uncharacterized protein (113 aa).

3 consecutive transmembrane segments (helical) span residues 9 to 31 (IFPS…SVIY), 36 to 58 (VLTI…YKFQ), and 71 to 90 (IMAL…VVAV).

It localises to the cell membrane. This is an uncharacterized protein from Archaeoglobus fulgidus (strain ATCC 49558 / DSM 4304 / JCM 9628 / NBRC 100126 / VC-16).